A 445-amino-acid polypeptide reads, in one-letter code: Lipoyl synthase, mitochondrial (445 aa).

The transit peptide at 1 to 40 (MRPGSWRVITHYGFTGPIQRLQAPLRRSLARAAALSTRSY) directs the protein to the mitochondrion. Positions 42–71 (TIPSAPSSQPTSQESSPAASASASASAPAT) are enriched in low complexity. A disordered region spans residues 42-77 (TIPSAPSSQPTSQESSPAASASASASAPATKPRPTY). C157, C162, C168, C188, C192, C195, and S405 together coordinate [4Fe-4S] cluster. The Radical SAM core domain maps to 171–394 (GSNKAAATAT…RQRALDMGFL (224 aa)).

Belongs to the radical SAM superfamily. Lipoyl synthase family. [4Fe-4S] cluster is required as a cofactor.

The protein resides in the mitochondrion. It carries out the reaction [[Fe-S] cluster scaffold protein carrying a second [4Fe-4S](2+) cluster] + N(6)-octanoyl-L-lysyl-[protein] + 2 oxidized [2Fe-2S]-[ferredoxin] + 2 S-adenosyl-L-methionine + 4 H(+) = [[Fe-S] cluster scaffold protein] + N(6)-[(R)-dihydrolipoyl]-L-lysyl-[protein] + 4 Fe(3+) + 2 hydrogen sulfide + 2 5'-deoxyadenosine + 2 L-methionine + 2 reduced [2Fe-2S]-[ferredoxin]. It functions in the pathway protein modification; protein lipoylation via endogenous pathway; protein N(6)-(lipoyl)lysine from octanoyl-[acyl-carrier-protein]: step 2/2. Functionally, catalyzes the radical-mediated insertion of two sulfur atoms into the C-6 and C-8 positions of the octanoyl moiety bound to the lipoyl domains of lipoate-dependent enzymes, thereby converting the octanoylated domains into lipoylated derivatives. The sequence is that of Lipoyl synthase, mitochondrial from Sordaria macrospora (strain ATCC MYA-333 / DSM 997 / K(L3346) / K-hell).